The primary structure comprises 448 residues: Delta(14)-sterol reductase ERG24 (448 aa).

The next 7 helical transmembrane spans lie at 18-38, 75-95, 108-128, 157-177, 251-271, 279-299, and 318-338; these read ISGALGITIGLPTLTVLFYLL, CWSAYLAWFFILVILDYLLPG, VLNYKINGLSMSSLLIVLLLA, IIICFLFSFMLAVFVYIISFI, VTDSMIVVNLLQAFYIFDGVL, MIDITTDGFGFMLSFGDLAWV, and NLGWTLSLLIVGLQALGFYIF. NADP(+) contacts are provided by residues Lys-345, Arg-349, Leu-368, Trp-373, and 380 to 381; that span reads NY. A helical transmembrane segment spans residues 394–414; the sequence is PTGFQTPLTYFYVIYFASLLI. Residues Asp-420, 424–428, and Tyr-435 contribute to the NADP(+) site; that span reads CRAKY.

Belongs to the ERG4/ERG24 family.

It localises to the endoplasmic reticulum membrane. It carries out the reaction 4,4-dimethyl-5alpha-cholesta-8,24-dien-3beta-ol + NADP(+) = 4,4-dimethyl-5alpha-cholesta-8,14,24-trien-3beta-ol + NADPH + H(+). It participates in steroid biosynthesis; zymosterol biosynthesis; zymosterol from lanosterol: step 2/6. C-14 sterol reductase; part of the third module of ergosterol biosynthesis pathway that includes the late steps of the pathway. ERG24 reduces the C14=C15 double bond of 4,4-dimethyl-cholesta-8,14,24-trienol to produce 4,4-dimethyl-cholesta-8,24-dienol. The third module or late pathway involves the ergosterol synthesis itself through consecutive reactions that mainly occur in the endoplasmic reticulum (ER) membrane. Firstly, the squalene synthase ERG9 catalyzes the condensation of 2 farnesyl pyrophosphate moieties to form squalene, which is the precursor of all steroids. Squalene synthase is crucial for balancing the incorporation of farnesyl diphosphate (FPP) into sterol and nonsterol isoprene synthesis. Secondly, the squalene epoxidase ERG1 catalyzes the stereospecific oxidation of squalene to (S)-2,3-epoxysqualene, which is considered to be a rate-limiting enzyme in steroid biosynthesis. Then, the lanosterol synthase ERG7 catalyzes the cyclization of (S)-2,3 oxidosqualene to lanosterol, a reaction that forms the sterol core. In the next steps, lanosterol is transformed to zymosterol through a complex process involving various demethylation, reduction and desaturation reactions. The lanosterol 14-alpha-demethylase ERG11 (also known as CYP51) catalyzes C14-demethylation of lanosterol to produce 4,4'-dimethyl cholesta-8,14,24-triene-3-beta-ol, which is critical for ergosterol biosynthesis. The C-14 reductase ERG24 reduces the C14=C15 double bond of 4,4-dimethyl-cholesta-8,14,24-trienol to produce 4,4-dimethyl-cholesta-8,24-dienol. 4,4-dimethyl-cholesta-8,24-dienol is substrate of the C-4 demethylation complex ERG25-ERG26-ERG27 in which ERG25 catalyzes the three-step monooxygenation required for the demethylation of 4,4-dimethyl and 4alpha-methylsterols, ERG26 catalyzes the oxidative decarboxylation that results in a reduction of the 3-beta-hydroxy group at the C-3 carbon to an oxo group, and ERG27 is responsible for the reduction of the keto group on the C-3. ERG28 has a role as a scaffold to help anchor ERG25, ERG26 and ERG27 to the endoplasmic reticulum and ERG29 regulates the activity of the iron-containing C4-methylsterol oxidase ERG25. Then, the sterol 24-C-methyltransferase ERG6 catalyzes the methyl transfer from S-adenosyl-methionine to the C-24 of zymosterol to form fecosterol. The C-8 sterol isomerase ERG2 catalyzes the reaction which results in unsaturation at C-7 in the B ring of sterols and thus converts fecosterol to episterol. The sterol-C5-desaturase ERG3 then catalyzes the introduction of a C-5 double bond in the B ring to produce 5-dehydroepisterol. The C-22 sterol desaturase ERG5 further converts 5-dehydroepisterol into ergosta-5,7,22,24(28)-tetraen-3beta-ol by forming the C-22(23) double bond in the sterol side chain. Finally, ergosta-5,7,22,24(28)-tetraen-3beta-ol is substrate of the C-24(28) sterol reductase ERG4 to produce ergosterol. In Candida albicans (strain SC5314 / ATCC MYA-2876) (Yeast), this protein is Delta(14)-sterol reductase ERG24.